The sequence spans 2157 residues: Polyketide synthase 2 (2157 aa).

Positions 7–244 (FIFGDQTGGF…IPIPIWAPYH (238 aa)) are N-terminal acylcarrier protein transacylase domain (SAT). In terms of domain architecture, Ketosynthase family 3 (KS3) spans 374–807 (DAKIAIIGMS…GGNSALLLED (434 aa)). Residues Cys-546, His-681, and His-723 each act as for beta-ketoacyl synthase activity in the active site. Positions 908 to 1213 (GFVFSGQGAQ…ASLHRKDDGW (306 aa)) are malonyl-CoA:ACP transacylase (MAT) domain. The For acyl/malonyl transferase activity role is filled by Ser-998. A product template (PT) domain region spans residues 1290–1605 (TSSVQKIIQQ…RSLLNKVLPP (316 aa)). The interval 1294-1428 (QKIIQQTDGP…CLLCFADPNS (135 aa)) is N-terminal hotdog fold. Residues 1294 to 1600 (QKIIQQTDGP…FLGMSRSLLN (307 aa)) form the PKS/mFAS DH domain. The active-site Proton acceptor; for dehydratase activity is His-1327. The segment at 1455-1600 (TDSLLSKGIV…FLGMSRSLLN (146 aa)) is C-terminal hotdog fold. Asp-1514 functions as the Proton donor; for dehydratase activity in the catalytic mechanism. Positions 1629-1653 (AKDTERRPLDIPTRAQRQPNSPPTG) are disordered. Positions 1649–1726 (SPPTGTLGRI…ELKEFLGADQ (78 aa)) constitute a Carrier 1 domain. Ser-1686 is modified (O-(pantetheine 4'-phosphoryl)serine). Residues 1729-1765 (DDAVACESSNGQHTPQTSDKGSGTLAAQKPDDDTGSD) form a disordered region. Over residues 1735–1749 (ESSNGQHTPQTSDKG) the composition is skewed to polar residues. The region spanning 1765–1839 (DTTLHRVCAI…SLQKALCGTE (75 aa)) is the Carrier 2 domain. Position 1799 is an O-(pantetheine 4'-phosphoryl)serine (Ser-1799). The thioesterase (TE) domain stretch occupies residues 1875 to 2151 (ASPPHATSIL…MAEMGDLIGE (277 aa)). The For thioesterase activity role is filled by Ser-1981.

Its function is as follows. Polyketide synthase; part of the Pks2 gene cluster that mediates the formation of infectious structures (appressoria), enabling these fungi to kill insects faster. The product of the Pks2 gene cluster is different from the one of Pks1 and has still not been identified. This is Polyketide synthase 2 from Metarhizium guizhouense (strain ARSEF 977).